We begin with the raw amino-acid sequence, 339 residues long: Glycerol-3-phosphate dehydrogenase [NAD(P)+] (339 aa).

NADPH contacts are provided by S15, Y16, H36, and K110. The sn-glycerol 3-phosphate site is built by K110, G139, and T141. Residue A143 participates in NADPH binding. Sn-glycerol 3-phosphate-binding residues include K195, D248, S258, R259, and N260. K195 functions as the Proton acceptor in the catalytic mechanism. R259 contributes to the NADPH binding site. NADPH-binding residues include V283 and E285.

The protein belongs to the NAD-dependent glycerol-3-phosphate dehydrogenase family.

It localises to the cytoplasm. It carries out the reaction sn-glycerol 3-phosphate + NAD(+) = dihydroxyacetone phosphate + NADH + H(+). The enzyme catalyses sn-glycerol 3-phosphate + NADP(+) = dihydroxyacetone phosphate + NADPH + H(+). It participates in membrane lipid metabolism; glycerophospholipid metabolism. Its function is as follows. Catalyzes the reduction of the glycolytic intermediate dihydroxyacetone phosphate (DHAP) to sn-glycerol 3-phosphate (G3P), the key precursor for phospholipid synthesis. In Shigella boydii serotype 18 (strain CDC 3083-94 / BS512), this protein is Glycerol-3-phosphate dehydrogenase [NAD(P)+].